A 382-amino-acid chain; its full sequence is GDP-mannose transporter (382 aa).

Residues 1–40 (MADDKKTNEYTIEMDKLDHGNKDFEAPAPAVRPRGPPVAQ) are Cytoplasmic-facing. Residues 41-61 (LANNPILPVLAYCGSSILMTV) form a helical membrane-spanning segment. Over 62 to 71 (MNKYVLSGRD) the chain is Lumenal. A helical membrane pass occupies residues 72–92 (FNLNFFLLCVQSIVCIVAIQT). Over 93–110 (CKVSKLITYRDFNSDEAK) the chain is Cytoplasmic. The helical transmembrane segment at 111-127 (KWFPITLLLIGMIYTGS) threads the bilayer. Topologically, residues 128 to 134 (KALQYLS) are lumenal. The chain crosses the membrane as a helical span at residues 135-151 (IPVYTIFKNLTIILIAY). Over 152–160 (GEVLWFGGS) the chain is Cytoplasmic. Residues 161-182 (VTGLTLFSFGLMVLSSIIAAWA) form a helical membrane-spanning segment. Topologically, residues 183-200 (DIKHAVESSGDATAKVST) are lumenal. Residues 201–221 (LNAGYIWMLINCLCTSSYVLG) traverse the membrane as a helical segment. Over 222-233 (MRKRIKLTNFKD) the chain is Cytoplasmic. Residues 234–254 (FDTMFYNNLLSIPVLLVLTFL) traverse the membrane as a helical segment. Residues 255–274 (MEDWSSANIARNFPSTDRNG) lie on the Lumenal side of the membrane. The helical transmembrane segment at 275-295 (ILFAMILSGLSSVFISYTSAW) threads the bilayer. Over 296–303 (CVRVTSST) the chain is Cytoplasmic. The chain crosses the membrane as a helical span at residues 304 to 324 (TYSMVGALNKLPIALSGLIFF). The Lumenal portion of the chain corresponds to 325 to 327 (DAP). A helical membrane pass occupies residues 328–348 (VTFPSVSAIVVGFISGIVYAV). The Cytoplasmic portion of the chain corresponds to 349 to 382 (AKIKQSAKPKTGVLPMSNPPVSASSQSMRDSLRS). The tract at residues 358–382 (KTGVLPMSNPPVSASSQSMRDSLRS) is disordered. Positions 367–382 (PPVSASSQSMRDSLRS) are enriched in polar residues.

It belongs to the TPT transporter family. SLC35D subfamily. Homooligomer.

Its subcellular location is the golgi apparatus membrane. It localises to the cytoplasmic vesicle membrane. The protein localises to the endoplasmic reticulum membrane. Involved in the import of GDP-mannose from the cytoplasm into the Golgi lumen. The chain is GDP-mannose transporter (gmt1) from Aspergillus fumigatus (strain CBS 144.89 / FGSC A1163 / CEA10) (Neosartorya fumigata).